We begin with the raw amino-acid sequence, 305 residues long: PI-PLC X domain-containing protein 1 (305 aa).

Positions 1-24 (MSMSTLRHFLWLGALLLATIQVSA) are cleaved as a signal peptide. One can recognise a PI-PLC X-box domain in the interval 25–189 (LPTAQDLICN…RLIVFVDSKA (165 aa)). Residues His53 and His97 contribute to the active site. N-linked (GlcNAc...) asparagine glycosylation is present at Asn237.

It is found in the secreted. The protein is PI-PLC X domain-containing protein 1 of Arthroderma benhamiae (strain ATCC MYA-4681 / CBS 112371) (Trichophyton mentagrophytes).